Reading from the N-terminus, the 262-residue chain is NAC domain-containing protein 71 (262 aa).

Residues 6-160 (LPPGFRFHPT…AFALCRVVKK (155 aa)) form the NAC domain. Residues 107 to 166 (AGYRKTLVFYEGRAPLGDRTNWFMHEYRLCDIDDHSQKSPNFKGAFALCRVVKKNELKKN) mediate DNA binding.

The protein localises to the nucleus. Its function is as follows. Transcription factor involved in tissue reunion of wounded inflorescence stems. Required for the division of pith cells in the reunion process, which is dependent on polar-transported auxin and the wound-inducible hormones ethylene and jasmonate. Binds to the promoters of XTH19 and XTH20 to induce their expression via auxin signaling. XTH19 and XTH20 are involved in cell proliferation in the tissue reunion process of incised stems. Involved in hypocotyl graft union formation. Required for the auxin- mediated promotion of vascular tissue proliferation during hypocotyl graft attachment. In Arabidopsis thaliana (Mouse-ear cress), this protein is NAC domain-containing protein 71.